We begin with the raw amino-acid sequence, 806 residues long: Leucine--tRNA ligase (806 aa).

Residues 40-51 (PYPSGAGLHVGH) carry the 'HIGH' region motif. A 'KMSKS' region motif is present at residues 578–582 (KMSKS). Lys581 contacts ATP.

The protein belongs to the class-I aminoacyl-tRNA synthetase family.

The protein resides in the cytoplasm. It carries out the reaction tRNA(Leu) + L-leucine + ATP = L-leucyl-tRNA(Leu) + AMP + diphosphate. The polypeptide is Leucine--tRNA ligase (Staphylococcus aureus (strain MSSA476)).